Here is a 1687-residue protein sequence, read N- to C-terminus: Vitellogenin-2 (1687 aa).

The N-terminal stretch at 1-15 (MRVLVLALTVALVAG) is a signal peptide. The Vitellogenin domain occupies 24–663 (FAPGKTYEYK…DAATVLPKNI (640 aa)). Asn941, Asn945, Asn954, Asn1004, Asn1019, and Asn1083 each carry an N-linked (GlcNAc...) asparagine glycan. A disordered region spans residues 1081–1174 (LKNSTKASSS…SSSSSKTKWQ (94 aa)). The segment covering 1088-1127 (SSSSSGSSRSSRSRSSSSSSSSSSSSSSRSSSSSSRSSSS) has biased composition (low complexity). A glycan (N-linked (GlcNAc...) asparagine) is linked at Asn1142. Residues 1148–1169 (SSSSSSSSSSSSSSSSSSSSSS) are compositionally biased toward low complexity. Asn1179, Asn1257, Asn1292, Asn1342, Asn1361, Asn1366, and Asn1390 each carry an N-linked (GlcNAc...) asparagine glycan. A VWFD domain is found at 1417 to 1593 (AECTVVEDTV…SWVLPAKSCR (177 aa)). Disulfide bonds link Cys1419-Cys1556 and Cys1442-Cys1592. 2 N-linked (GlcNAc...) asparagine glycosylation sites follow: Asn1577 and Asn1655.

Phosvitin, an egg yolk storage protein, is one of the most highly phosphorylated (10%) proteins in nature. Produced by the liver, secreted into the blood and then sequestered by receptor mediated endocytosis into growing oocytes, where it is generally cleaved, giving rise to the respective yolk components lipovitellins and phosvitin.

Its function is as follows. Precursor of the egg-yolk proteins that are sources of nutrients during early development of oviparous organisms. This Fundulus heteroclitus (Killifish) protein is Vitellogenin-2.